Reading from the N-terminus, the 187-residue chain is Interferon beta (187 aa).

Residues 1-21 (MTNKCLLQIALLLCFSTTALS) form the signal peptide. A Phosphotyrosine modification is found at tyrosine 24. Cysteine 52 and cysteine 162 are oxidised to a cystine. N-linked (GlcNAc...) asparagine glycosylation is present at asparagine 101.

This sequence belongs to the alpha/beta interferon family. As to quaternary structure, monomer.

It localises to the secreted. Functionally, type I interferon cytokine that plays a key role in the innate immune response to infection, developing tumors and other inflammatory stimuli. Signals via binding to high-affinity (IFNAR2) and low-affinity (IFNAR1) heterodimeric receptor, activating the canonical Jak-STAT signaling pathway resulting in transcriptional activation or repression of interferon-regulated genes that encode the effectors of the interferon response, such as antiviral proteins, regulators of cell proliferation and differentiation, and immunoregulatory proteins. Signals mostly via binding to a IFNAR1-IFNAR2 heterodimeric receptor, but can also function with IFNAR1 alone and independently of Jak-STAT pathways. Elicits a wide variety of responses, including antiviral and antibacterial activities, and can regulate the development of B-cells, myelopoiesis and lipopolysaccharide (LPS)-inducible production of tumor necrosis factor. Plays a role in neuronal homeostasis by regulating dopamine turnover and protecting dopaminergic neurons: acts by promoting neuronal autophagy and alpha-synuclein clearance, thereby preventing dopaminergic neuron loss. IFNB1 is more potent than interferon-alpha (IFN-alpha) in inducing the apoptotic and antiproliferative pathways required for control of tumor cell growth. This Homo sapiens (Human) protein is Interferon beta.